A 248-amino-acid polypeptide reads, in one-letter code: 3,4-dihydroxyphthalate decarboxylase (248 aa).

The active-site Proton donor/acceptor is Glu-90. A divalent metal cation contacts are provided by Glu-90, His-109, His-111, and His-177.

Belongs to the aldolase class II family. The cofactor is a divalent metal cation.

The catalysed reaction is 3,4-dihydroxyphthalate + H(+) = 3,4-dihydroxybenzoate + CO2. It participates in xenobiotic degradation; phthalate degradation. Its function is as follows. Catalyzes the decarboxylation of 3,4-dihydroxyphthalate to protocatechuate (3,4-dihydroxybenzoate) during phthalate metabolism. This Arthrobacter keyseri protein is 3,4-dihydroxyphthalate decarboxylase.